Consider the following 509-residue polypeptide: Heat shock 70 kDa protein 14 (509 aa).

The protein belongs to the heat shock protein 70 family. Component of ribosome-associated complex (RAC), a heterodimer composed of Hsp70/DnaK-type chaperone HSPA14 and Hsp40/DnaJ-type chaperone DNAJC2.

Its subcellular location is the cytoplasm. The protein resides in the cytosol. Functionally, component of the ribosome-associated complex (RAC), a complex involved in folding or maintaining nascent polypeptides in a folding-competent state. In the RAC complex, binds to the nascent polypeptide chain, while DNAJC2 stimulates its ATPase activity. This is Heat shock 70 kDa protein 14 (HSPA14) from Bos taurus (Bovine).